The primary structure comprises 257 residues: uncharacterized protein (257 aa).

The helical transmembrane segment at 6–26 (IFWLNLAAIIIISIVVSGDMF) threads the bilayer.

Belongs to the staphylococcal tandem lipoprotein family.

The protein resides in the cell membrane. This is an uncharacterized protein from Staphylococcus aureus (strain COL).